The following is a 48-amino-acid chain: Protein 1.8 (48 aa).

This is Protein 1.8 from Escherichia coli (Bacteriophage T7).